Reading from the N-terminus, the 1248-residue chain is MSETKWTKEQYAAITQKDCNLLVAAAAGAGKTAVLVERIIRKITDKENPVDIDSLLVVTFTNAAATEMRERIGAAISDTIEKNQGSKNISRQLILLNKASITTIHSFCLEVIRSNFQSIEIDPGFKILDETEATLLKSETLSDLFEEIYEDAEENEDFFELLESYGGNRDDLKIQDMVMSIYSFVQSYPWPEKWLEQQIESYNFEVGNDFGETTWGRILLETSLMRLEGLRDIMNEACAKIKNAQGLEKYLSVFIEDNDNLEKLIGICKTGMNWDQLYNYVNSFEFRNLPRCGKDAEKSVQESVKKIRDELKSVINGLRDEVFFMESDEIASDLKTMYPILKCVSRLVMDFGRRYAHKKSQRASVDFNDLEHFCLNILAETDKDGNIRPTKIAQNYKDKFTEILVDEYQDSNLVQEIIINMISKKDIGSPNVFMVGDVKQSIYRFRQAKPELFLEKYNNYSIDEDSSYRKILLFKNFRSRKDVVDGINYIFKQIMSQKVGELDYNEIEELNPGAGFSPCQNEETVVGGAIELHLIETSVGDNTVLSEGSEPMDEQDFPEEDEILDNIQKEARMVANRIIELFQADKDGKKYAVYDKKLGEYRNVRFSDIVILLRTTRNWTEVFSAELANADIPVFADTGSGFFKTPEVQVVLSLLQIIDNPYQDIPLLAVLRSPIVNFSTADLTDVRLMNRNASIFEALKETAVHDTQVSKKASDFLQKLEKWRDMSLYMSTHELIWQLYNETGYFSIVGAMQDGERKQANLKILFERALQYENTSYSGLFNFISFIDKLKTNKGDMGSAKVLGENDNVVRLMSIHKSKGLEFPVVFLCGCGKKFNMQDMYKSILLHQELGFGPDFVDYKKRIKYPSIPKQAIAQKIRIETLSEEMRILYVAMTRAREKLIITGSVNNIEKSALKWLGTAQSNDNKFPPHNMLKAQNYLDWICPSVMRHKDSVILRNAAGLGVDYSGPTISDDSSWTIILADQSDIAVAKRFETDTQDREDITKWLQEKGSADSGDSHEIHRRLDWKYTYRDFAQIPSKISVTELKRYFHLNNDEDNSQLQYKTATIKKPAFLEGKKGLSPAEKGTAMHFVMQHLDFHNEDIAGQVKIMVKKELLTEIQAKSIDIMKISAFINSVIGKRMLKSVKVYREVPFNIELPYKEIYPQLPDVSDYEDKILLQGVVDCYFEEEDHIVLIDYKTDYIPYGDKQSVKEKYRLQISYYSRALEMLTLKRVKERYIYLFSTGEIVEM.

The region spanning 4 to 480 is the UvrD-like helicase ATP-binding domain; sequence TKWTKEQYAA…ILLFKNFRSR (477 aa). 25-32 contributes to the ATP binding site; the sequence is AAAGAGKT. In terms of domain architecture, UvrD-like helicase C-terminal spans 523 to 820; sequence ETVVGGAIEL…RLMSIHKSKG (298 aa).

The protein belongs to the helicase family. AddA subfamily. Heterodimer of AddA and AddB/RexB. Requires Mg(2+) as cofactor.

The catalysed reaction is Couples ATP hydrolysis with the unwinding of duplex DNA by translocating in the 3'-5' direction.. It catalyses the reaction ATP + H2O = ADP + phosphate + H(+). In terms of biological role, the heterodimer acts as both an ATP-dependent DNA helicase and an ATP-dependent, dual-direction single-stranded exonuclease. Recognizes the chi site generating a DNA molecule suitable for the initiation of homologous recombination. The AddA nuclease domain is required for chi fragment generation; this subunit has the helicase and 3' -&gt; 5' nuclease activities. The protein is ATP-dependent helicase/nuclease subunit A of Ruminiclostridium cellulolyticum (strain ATCC 35319 / DSM 5812 / JCM 6584 / H10) (Clostridium cellulolyticum).